A 380-amino-acid polypeptide reads, in one-letter code: Erythronate-4-phosphate dehydrogenase (380 aa).

Residues Ser45 and Thr66 each contribute to the substrate site. A disulfide bond links Cys65 and Cys90. Residues Gln126–Val127, Asp146, Thr175, Ala206–Arg208, and Asp232 each bind NAD(+). Arg208 is an active-site residue. Glu237 is an active-site residue. Catalysis depends on His254, which acts as the Proton donor. Gly257 is a binding site for NAD(+). Position 258 (Tyr258) interacts with substrate.

The protein belongs to the D-isomer specific 2-hydroxyacid dehydrogenase family. PdxB subfamily. In terms of assembly, homodimer.

The protein localises to the cytoplasm. The catalysed reaction is 4-phospho-D-erythronate + NAD(+) = (R)-3-hydroxy-2-oxo-4-phosphooxybutanoate + NADH + H(+). It functions in the pathway cofactor biosynthesis; pyridoxine 5'-phosphate biosynthesis; pyridoxine 5'-phosphate from D-erythrose 4-phosphate: step 2/5. Functionally, catalyzes the oxidation of erythronate-4-phosphate to 3-hydroxy-2-oxo-4-phosphonooxybutanoate. This is Erythronate-4-phosphate dehydrogenase from Pseudomonas aeruginosa (strain ATCC 15692 / DSM 22644 / CIP 104116 / JCM 14847 / LMG 12228 / 1C / PRS 101 / PAO1).